We begin with the raw amino-acid sequence, 329 residues long: tRNA-modifying protein YgfZ (329 aa).

Residues Trp-28 and Trp-188 each contribute to the folate site.

This sequence belongs to the tRNA-modifying YgfZ family.

It is found in the cytoplasm. Folate-binding protein involved in regulating the level of ATP-DnaA and in the modification of some tRNAs. It is probably a key factor in regulatory networks that act via tRNA modification, such as initiation of chromosomal replication. In Photorhabdus laumondii subsp. laumondii (strain DSM 15139 / CIP 105565 / TT01) (Photorhabdus luminescens subsp. laumondii), this protein is tRNA-modifying protein YgfZ.